The chain runs to 298 residues: Probable 2-(5''-triphosphoribosyl)-3'-dephosphocoenzyme-A synthase (298 aa).

It belongs to the CitG/MdcB family.

It catalyses the reaction 3'-dephospho-CoA + ATP = 2'-(5''-triphospho-alpha-D-ribosyl)-3'-dephospho-CoA + adenine. In Salmonella arizonae (strain ATCC BAA-731 / CDC346-86 / RSK2980), this protein is Probable 2-(5''-triphosphoribosyl)-3'-dephosphocoenzyme-A synthase.